Reading from the N-terminus, the 787-residue chain is Mitochondrial intermediate peptidase (787 aa).

A mitochondrion-targeting transit peptide spans 1–36 (MQNKVLRGILFKNVPLGYSYNRSIRHPTFGNSIIRW). Residue histidine 573 participates in Zn(2+) binding. The active site involves glutamate 574. Zn(2+) is bound by residues histidine 577 and histidine 580.

This sequence belongs to the peptidase M3 family. It depends on Zn(2+) as a cofactor.

It localises to the mitochondrion matrix. It catalyses the reaction Release of an N-terminal octapeptide as second stage of processing of some proteins imported into the mitochondrion.. Functionally, cleaves proteins, imported into the mitochondrion, to their mature size. While most mitochondrial precursor proteins are processed to the mature form in one step by mitochondrial processing peptidase (MPP), the sequential cleavage by MIP of an octapeptide after initial processing by MPP is a required step for a subgroup of nuclear-encoded precursor proteins destined for the matrix or the inner membrane. This Vanderwaltozyma polyspora (strain ATCC 22028 / DSM 70294 / BCRC 21397 / CBS 2163 / NBRC 10782 / NRRL Y-8283 / UCD 57-17) (Kluyveromyces polysporus) protein is Mitochondrial intermediate peptidase (OCT1).